Here is a 576-residue protein sequence, read N- to C-terminus: Ferroportin (576 aa).

Over 1-23 (MPKAGEQARQGGCCGSLANYLTS) the chain is Cytoplasmic. The helical transmembrane segment at 24–53 (AKFLLYLGHSLSTWGDRMWHFAVSVFLVEL) threads the bilayer. Fe cation-binding residues include D39 and H43. Topologically, residues 54-57 (YGNS) are extracellular. Residues 58 to 84 (LLLTAVYGLVVAGSVLVLGAIIGDWVD) form a helical membrane-spanning segment. At 85 to 87 (KNA) the chain is on the cytoplasmic side. Residues 88–118 (RLKVAQTSLVVQNVSVILCGIILMMVFLHKN) traverse the membrane as a helical segment. Residues 119 to 126 (ELLTMYHG) lie on the Extracellular side of the membrane. A helical membrane pass occupies residues 127–162 (WVLTFCYILIITIADVANLASTATAITIQRDWIVVV). Residues 163-164 (AG) lie on the Cytoplasmic side of the membrane. Residues 165–195 (GDRSKLADMNATIRRIDQLTNILAPMAVGQI) traverse the membrane as a helical segment. The Extracellular segment spans residues 196 to 202 (MTFGSAV). Residues 203 to 229 (IGCGFISGWNLVSMCVEYFLLWKVYQK) form a helical membrane-spanning segment. Residues 230 to 306 (TPALAVKAAL…DGWVSYYNQS (77 aa)) lie on the Cytoplasmic side of the membrane. The helical transmembrane segment at 307 to 333 (VFLAGMGLAFLYMTVLGFDCITTGYAY) threads the bilayer. Position 326 (C326) interacts with Fe cation. The Extracellular portion of the chain corresponds to 334 to 338 (TQGLS). The chain crosses the membrane as a helical span at residues 339–366 (GSILSILMGASAITGIMGTVAFTWLRRK). Topologically, residues 367 to 368 (CG) are cytoplasmic. Residues 369–391 (LVRTGLISGFAQLSCLILCVISV) traverse the membrane as a helical segment. Topologically, residues 392 to 458 (FMPGSPLDLS…ETTPKSVPII (67 aa)) are extracellular. Residue N439 is glycosylated (N-linked (GlcNAc...) asparagine). The chain crosses the membrane as a helical span at residues 459 to 488 (SVSLLFAGVIAARIGLWSFDLTVTQLLQEN). Residues 489-493 (VIESE) are Cytoplasmic-facing. The chain crosses the membrane as a helical span at residues 494–518 (RGIINGVQNSMNYLLDLLHFIMVIL). Residue H512 coordinates Fe cation. The Extracellular portion of the chain corresponds to 519 to 521 (APN). The helical transmembrane segment at 522–547 (PEAFGLLVLISVSFVAMGHIMYFRFA) threads the bilayer. Residues 548–576 (QKTLGSKLFACGADDEEVTNENQANTSVV) are Cytoplasmic-facing.

The protein belongs to the ferroportin (FP) (TC 2.A.100) family. SLC40A subfamily. As to quaternary structure, identified in a complex with STOM. Interacts with HAMP; affinity of the peptide hormone HAMP for SLC40A1 increases by 80-fold in the presence of iron and the interaction promotes SLC40A1 ubiquitination and degradation. Part of a complex composed of SLC40A1/ferroportin, TF/transferrin and HEPH/hephaestin that transfers iron from cells to transferrin. Post-translationally, polyubiquitinated by RNF217; leading to proteasomal degradation. Under conditions of high systemic iron levels, both the hormone peptide hepcidin/HAMP and holo(iron bound)-transferrin/TF induce the ubiquitination, internalization and proteasomal degradation of SLC40A1 to control iron release from cells.

The protein localises to the cell membrane. Its subcellular location is the basolateral cell membrane. It carries out the reaction Fe(2+)(in) = Fe(2+)(out). With respect to regulation, during elevated serum iron levels, liver-derived hepcidin/HAMP negatively regulates cell surface ferroportin/SLC40A1 by inducing its ubiquitination, internalization, and degradation. Indeed, hepcidin/HAMP affinity towards ferroportin/SLC40A1 increases by 80-fold in the presence of iron. Transports Fe(2+) from the inside of a cell to the outside of the cell, playing a key role for maintaining systemic iron homeostasis. Transports iron from intestinal, splenic, hepatic cells, macrophages and erythrocytes into the blood to provide iron to other tissues. Controls therefore dietary iron uptake, iron recycling by macrophages and erythrocytes, and release of iron stores in hepatocytes. When iron is in excess in serum, circulating HAMP/hepcidin levels increase resulting in a degradation of SLC40A1, thus limiting the iron efflux to plasma. This is Ferroportin from Canis lupus familiaris (Dog).